The sequence spans 308 residues: 2-dehydro-3-deoxy-phosphogluconate/2-dehydro-3-deoxy-6-phosphogalactonate aldolase (308 aa).

Residues 57–58 (TT), 144–146 (YNY), and 169–171 (KDT) each bind substrate. Lysine 169 acts as the Schiff-base intermediate with substrate in catalysis.

The protein belongs to the DapA family. KDPG aldolase subfamily. Homotetramer; dimer of dimers.

The catalysed reaction is 2-dehydro-3-deoxy-6-phospho-D-gluconate = D-glyceraldehyde 3-phosphate + pyruvate. The enzyme catalyses 2-dehydro-3-deoxy-6-phospho-D-galactonate = D-glyceraldehyde 3-phosphate + pyruvate. The protein operates within carbohydrate acid metabolism; 2-dehydro-3-deoxy-D-gluconate degradation; D-glyceraldehyde 3-phosphate and pyruvate from 2-dehydro-3-deoxy-D-gluconate: step 2/2. Involved in the degradation of glucose and galactose via the Entner-Doudoroff pathway. Catalyzes the reversible cleavage of 2-keto-3-deoxy-6-phosphogluconate (KDPG) and 2-keto-3-deoxygluconate (KDG) forming pyruvate and glyceraldehyde 3-phosphate or glyceraldehyde, respectively. It is also able to catalyze the reversible cleavage of 2-keto-3-deoxy-6-phosphogalactonate (KDPGal) and 2-keto-3-deoxygalactonate (KDGal). The protein is 2-dehydro-3-deoxy-phosphogluconate/2-dehydro-3-deoxy-6-phosphogalactonate aldolase (eda) of Saccharolobus solfataricus (strain ATCC 35092 / DSM 1617 / JCM 11322 / P2) (Sulfolobus solfataricus).